Here is a 230-residue protein sequence, read N- to C-terminus: Endonuclease NucS (230 aa).

The protein belongs to the NucS endonuclease family.

The protein localises to the cytoplasm. Functionally, cleaves both 3' and 5' ssDNA extremities of branched DNA structures. This chain is Endonuclease NucS, found in Corynebacterium aurimucosum (strain ATCC 700975 / DSM 44827 / CIP 107346 / CN-1) (Corynebacterium nigricans).